The chain runs to 297 residues: HTH-type transcriptional regulator ArgP (297 aa).

The HTH lysR-type domain maps to 4-60; it reads PDYRTLQALDAVIRERGFERAAQKLCITQSAVSQRIKQLENTFGQPLLVRTVPPRPT. The segment at residues 21 to 40 is a DNA-binding region (H-T-H motif); the sequence is FERAAQKLCITQSAVSQRIK.

The protein belongs to the LysR transcriptional regulatory family. As to quaternary structure, homodimer.

Its function is as follows. Controls the transcription of genes involved in arginine and lysine metabolism. The sequence is that of HTH-type transcriptional regulator ArgP from Cronobacter sakazakii (strain ATCC BAA-894) (Enterobacter sakazakii).